The following is a 354-amino-acid chain: Protein RecA (354 aa).

67–74 (GPESSGKT) is a binding site for ATP. The segment at 331–354 (GGANSSDSKTESDENIDLETGEVF) is disordered. A compositionally biased stretch (acidic residues) spans 343 to 354 (DENIDLETGEVF).

The protein belongs to the RecA family.

It is found in the cytoplasm. In terms of biological role, can catalyze the hydrolysis of ATP in the presence of single-stranded DNA, the ATP-dependent uptake of single-stranded DNA by duplex DNA, and the ATP-dependent hybridization of homologous single-stranded DNAs. It interacts with LexA causing its activation and leading to its autocatalytic cleavage. In Shewanella frigidimarina (strain NCIMB 400), this protein is Protein RecA.